The following is a 436-amino-acid chain: Gamma-glutamyl phosphate reductase (436 aa).

This sequence belongs to the gamma-glutamyl phosphate reductase family.

Its subcellular location is the cytoplasm. The catalysed reaction is L-glutamate 5-semialdehyde + phosphate + NADP(+) = L-glutamyl 5-phosphate + NADPH + H(+). It functions in the pathway amino-acid biosynthesis; L-proline biosynthesis; L-glutamate 5-semialdehyde from L-glutamate: step 2/2. Its function is as follows. Catalyzes the NADPH-dependent reduction of L-glutamate 5-phosphate into L-glutamate 5-semialdehyde and phosphate. The product spontaneously undergoes cyclization to form 1-pyrroline-5-carboxylate. The sequence is that of Gamma-glutamyl phosphate reductase from Prochlorococcus marinus (strain MIT 9312).